The chain runs to 171 residues: Co-chaperone protein HscB homolog (171 aa).

The J domain occupies 2-74 (NHFELFGLPL…ISRAEYLLVQ (73 aa)).

It belongs to the HscB family. As to quaternary structure, interacts with HscA and stimulates its ATPase activity.

In terms of biological role, co-chaperone involved in the maturation of iron-sulfur cluster-containing proteins. Seems to help targeting proteins to be folded toward HscA. In Vibrio atlanticus (strain LGP32) (Vibrio splendidus (strain Mel32)), this protein is Co-chaperone protein HscB homolog.